The following is a 240-amino-acid chain: Large ribosomal subunit protein bL25 (240 aa).

Residues 1–24 (MATVMEFKATARPKSGKGAARAER) are disordered.

It belongs to the bacterial ribosomal protein bL25 family. CTC subfamily. Part of the 50S ribosomal subunit; part of the 5S rRNA/L5/L18/L25 subcomplex. Contacts the 5S rRNA. Binds to the 5S rRNA independently of L5 and L18.

Its function is as follows. This is one of the proteins that binds to the 5S RNA in the ribosome where it forms part of the central protuberance. The chain is Large ribosomal subunit protein bL25 from Rhodopseudomonas palustris (strain HaA2).